The primary structure comprises 309 residues: uncharacterized protein (309 aa).

The 77-residue stretch at 11–87 (QRLDTFLATL…FPLDILYEDE (77 aa)) folds into the S4 RNA-binding domain. The active site involves aspartate 131.

It belongs to the pseudouridine synthase RluA family.

It carries out the reaction a uridine in RNA = a pseudouridine in RNA. This is an uncharacterized protein from Mycoplasma pneumoniae (strain ATCC 29342 / M129 / Subtype 1) (Mycoplasmoides pneumoniae).